Reading from the N-terminus, the 71-residue chain is MKQSIIIALFATIAVMACLQMVAAVPAPVPEAAPGPVAEAEAYASPEALASPEAEPILGIITSLLKSLGKK.

The first 24 residues, 1 to 24 (MKQSIIIALFATIAVMACLQMVAA), serve as a signal peptide directing secretion. AXPX repeat units lie at residues 24 to 27 (AVPA), 32 to 35 (AAPG), 44 to 47 (ASPE), 50 to 53 (ASPE), and 54 to 57 (AEPI). The propeptide occupies 25–54 (VPAPVPEAAPGPVAEAEAYASPEALASPEA). Position 68 is a leucine amide (L68).

The protein belongs to the MCD family. Protonectin subfamily. Expressed by the venom gland.

It is found in the secreted. The protein localises to the target cell membrane. Its function is as follows. Antimicrobial peptide with strong activity against the fungus B.cinerea (MIC=0.5 ug/ml), and poor activities against the fungus C.albicans (MIC=100 ug/ml), the Gram-positive bacterium S.aureus (MIC=125 ug/ml) and the Gram-negative bacterium E.coli (MIC=125 ug/ml). In terms of biological role, antimicrobial peptide with strong activity against the fungus B.cinerea (MIC=0.4 uM), and poor activities against the fungus C.albicans (MIC=16 uM), the Gram-positive bacterium S.aureus (MIC=20 uM) and the Gram-negative bacterium E.coli (MIC=79 uM). Shows cytolytic activity against insect cell lines. Has potent hemolytic activity against ovine erythrocytes. Has potent hemolytic activity against human erythrocytes (EC(50)=31 uM). In vivo, peptide injection in the vicinity of the head and thorax of lepidopteran larvae induces feeding disorder followed by death due to starvation. This is Venom peptide 2-long from Orancistrocerus drewseni (Solitary wasp).